A 37-amino-acid polypeptide reads, in one-letter code: Somatostatin-37 (37 aa).

Residues 1-2 constitute a propeptide that is removed on maturation; that stretch reads AL. A disulfide bridge connects residues cysteine 26 and cysteine 37.

Belongs to the somatostatin family.

The protein resides in the secreted. Its function is as follows. Somatostatin inhibits the release of somatotropin. The chain is Somatostatin-37 (sst) from Petromyzon marinus (Sea lamprey).